A 510-amino-acid polypeptide reads, in one-letter code: MGQFITLMQSIPEALNMAFNVALVIVSLLCVTKGLINLWKCGIIQLLMFLALAGRSCDGEYKIDRRHVLSHVEFNLTRMFDNLPQSCSINNTHHYYKGPENTTWGVELTLTNTSVMNRSDENVTSIRSLGFGNITNCDKTGEAGHTLKWLLNELHFTVLHVTRHIGALCRTTAGAGLLIQYNLTTSDKGGEVGRHLIASLAQIIGDNKAAWVGKCYNNCTSSGKCSLTNCEGGTHYKFLVIQNTTWPNHCSYSPMSTVRMIIQKTAYSSVSRKLLGFFTWDISDSSGQHVPGGYCLEQWAIVWAGIKCFDNSVMAKCNKDHNEEFCDTMRLFDFNQNAIKTLQLNVENSLNLMKKSINGLISDSLVIRNSLKQLAKIPYCNYTKFWYVNDTITGKHSLPQCWLVSNGSYLNETHFKNEWLWESQKLYNDMLLKEYEERQGNTPLALADLCFWSLVFFTTTVFFQLIGIPTHRHLIGEGCPKPHRLTSNSLCSCGFYKIPKKPFRWVRKGK.

Gly-2 is lipidated: N-myristoyl glycine; by host. The Extracellular portion of the chain corresponds to 2–17 (GQFITLMQSIPEALNM). The chain crosses the membrane as a helical span at residues 18–32 (AFNVALVIVSLLCVT). Lys-33 is a topological domain (cytoplasmic). Residues 34–53 (GLINLWKCGIIQLLMFLALA) traverse the membrane as a helical segment. Extracellular-side segments run 54–58 (GRSCD) and 59–448 (GEYK…ALAD). Cys-57 lines the Zn(2+) pocket. Residues Asn-75, Asn-90, Asn-101, Asn-112, Asn-117, Asn-122, Asn-133, Asn-182, Asn-218, and Asn-243 are each glycosylated (N-linked (GlcNAc...) asparagine; by host). Cystine bridges form between Cys-87–Cys-250, Cys-295–Cys-308, Cys-317–Cys-326, and Cys-380–Cys-401. N-linked (GlcNAc...) asparagine; by host glycans are attached at residues Asn-381, Asn-389, Asn-406, and Asn-411. A helical membrane pass occupies residues 449–469 (LCFWSLVFFTTTVFFQLIGIP). Topologically, residues 470–510 (THRHLIGEGCPKPHRLTSNSLCSCGFYKIPKKPFRWVRKGK) are cytoplasmic. 6 residues coordinate Zn(2+): His-471, His-473, Cys-479, His-483, Cys-491, and Cys-493.

Belongs to the arenaviridae GPC protein family. As to quaternary structure, homotetramer; disulfide-linked. Homotetramer. GP2 homotetramers bind through ionic interactions with GP1 homotetramers to form the GP complex together with the stable signal peptide. The GP-C polyprotein interacts with the host protease MBTPS1/SKI-1 resulting in the polyprotein processing. In terms of processing, specific enzymatic cleavages in vivo yield mature proteins. GP-C polyprotein is cleaved in the endoplasmic reticulum by the host protease MBTPS1. Only cleaved glycoprotein is incorporated into virions. Post-translationally, the SSP remains stably associated with the GP complex following cleavage by signal peptidase and plays crucial roles in the trafficking of GP through the secretory pathway. Myristoylation is necessary for GP2-mediated fusion activity.

It localises to the virion membrane. Its subcellular location is the host endoplasmic reticulum membrane. The protein resides in the host Golgi apparatus membrane. The protein localises to the host cell membrane. In terms of biological role, class I viral fusion protein that directs fusion of viral and host endosomal membranes, leading to delivery of the nucleocapsid into the cytoplasm. Membrane fusion is mediated by irreversible conformational changes induced upon acidification in the endosome. Functionally, stable signal peptide (SSP): cleaved and functions as a signal peptide. In addition, it is also retained as the third component of the GP complex. The SSP is required for efficient glycoprotein expression, post-translational maturation cleavage of GP1 and GP2, glycoprotein transport to the cell surface plasma membrane, formation of infectious virus particles, and acid pH-dependent glycoprotein-mediated cell fusion. Its function is as follows. Interacts with the host receptor. In Pirital mammarenavirus (isolate Rat/Venezuela/VAV-488/1995) (PIRV), this protein is Pre-glycoprotein polyprotein GP complex.